The primary structure comprises 1028 residues: MNLFNLDRFRFEKRNKIEEAPEATPQPSQPGPSSPISLSAEEENAEGEVSRAGTPDSDVTEKTEDSSVPETPENDRKASISYFKNQRGIQYIDLSSDSEDVVSPNCSSTVQEKKFNKDTVIIVSEPSEDEESQGLPTMATRNNNDITNLKNLSFFPNYSDNLSTVRQTRYSENLSSDLLKLIDSTSTMDGAIAAALLMFGDAEGGGPRKRKLSSSSEPFEEDEFNDDQSMKKKRLDHGEESNESAESSTNWEKQESIVLKLQKEFPNFDKEELREVLKEHEWMYTEALESLKVFAEDQDMQYASPSEFPNGKEVSSRSQNYPKNAAKTKLKQKCSMKPQNGFNKKRKKNVFNPKRVIEDSEYDSGSDVGSSLDEDYSSGEEVMEDGYKGKILHFLQDASIGELTLIPQCSQKKAQKITELRPFNSWEALFTKMSKTNGLSEDLIWHCKTLIQERDVVIKLMNKCEDISNKLTKQVTMLTGNGGGWNTEQPSILNQSLSLKPYQKVGLNWLALVHKHGLNGILADEMGLGKTIQAIAFLAYLYQEGNKGPHLIVVPASTIDNWLREVNLWCPTLKVLCYYGSQEERKQIRYNIHSRYEEYNVIVTTYNCAISSSDDRSLFRRLKLNYAIFDEGHMLKNMGSIRYQHLMTINANNRLLLTGTPVQNNLLELMSLLNFVMPHMFSSSTSEIRRMFSSKTKPADEQSIYEKERIAHAKQIIKPFILRRVKEEVLKQLPPKKDRIELCAMSEKQEQLYMNLFNRLKKSINNMEKNTEMCNVMMQLRKMANHPLLHRQYYTAEKLKEMSQLMLKEPTHCEANPDLIFEDMEVMTDFELHVLCKQYRHINNFQLDMDLILDSGKFRVLGCILSELKQKGDRVVLFSQFTMMLDILEVLLKHHQHRYLRLDGKTQISERIHLIDEFNTDMDIFVFLLSTKAGGLGINLTSANVVILHDIDCNPYNDKQAEDRCHRVGQTKEVLVIKLIGQGTIEESMLKINQQKLKLEQDMTTVDEGDEGSMPADIATLLKTSMGL.

Methionine 1 carries the N-acetylmethionine modification. The interval 13 to 81 (KRNKIEEAPE…PENDRKASIS (69 aa)) is disordered. Phosphothreonine is present on threonine 54. Residue serine 57 is modified to Phosphoserine. Residue threonine 71 is modified to Phosphothreonine. A Glycyl lysine isopeptide (Lys-Gly) (interchain with G-Cter in SUMO2) cross-link involves residue lysine 77. Residue serine 79 is modified to Phosphoserine. Lysine 84 participates in a covalent cross-link: Glycyl lysine isopeptide (Lys-Gly) (interchain with G-Cter in SUMO2). Phosphoserine is present on residues serine 124, serine 127, serine 132, and serine 153. Positions 158-200 (YSDNLSTVRQTRYSENLSSDLLKLIDSTSTMDGAIAAALLMFG) constitute a CUE 1 domain. Disordered stretches follow at residues 204–253 (GGGP…NWEK) and 303–348 (ASPS…KRKK). Residues serine 213, serine 216, serine 241, and serine 244 each carry the phosphoserine modification. One can recognise a CUE 2 domain in the interval 253–296 (KQESIVLKLQKEFPNFDKEELREVLKEHEWMYTEALESLKVFAE). Phosphoserine is present on serine 304. Glycyl lysine isopeptide (Lys-Gly) (interchain with G-Cter in SUMO2) cross-links involve residues lysine 337 and lysine 473. A Helicase ATP-binding domain is found at 511–679 (ALVHKHGLNG…MSLLNFVMPH (169 aa)). 523-531 (ADEMGLGKT) lines the ATP pocket. The DEGH box signature appears at 630–633 (DEGH). A Nuclear localization signal motif is present at residues 723 to 740 (RRVKEEVLKQLPPKKDRI). Residue lysine 726 forms a Glycyl lysine isopeptide (Lys-Gly) (interchain with G-Cter in SUMO2) linkage. In terms of domain architecture, Helicase C-terminal spans 860–1012 (VLGCILSELK…MTTVDEGDEG (153 aa)). Residue 899 to 906 (YLRLDGKT) participates in ATP binding. A Glycyl lysine isopeptide (Lys-Gly) (interchain with G-Cter in SUMO2) cross-link involves residue lysine 998. A DEAD box motif is present at residues 1007-1010 (DEGD).

Belongs to the SNF2/RAD54 helicase family. As to quaternary structure, binds to DNA preferentially in the vicinity of transcriptional start sites. Interacts with MSH2 and TRIM28. Part of a complex composed of TRIM28, HDAC1, HDAC2 and EHMT2. Interacts with PCNA.

The protein resides in the nucleus. It localises to the chromosome. It catalyses the reaction ATP + H2O = ADP + phosphate + H(+). In terms of biological role, DNA helicase that possesses intrinsic ATP-dependent nucleosome-remodeling activity and is both required for DNA repair and heterochromatin organization. Promotes DNA end resection of double-strand breaks (DSBs) following DNA damage: probably acts by weakening histone DNA interactions in nucleosomes flanking DSBs. Required for the restoration of heterochromatin organization after replication. Acts at replication sites to facilitate the maintenance of heterochromatin by directing H3 and H4 histones deacetylation, H3 'Lys-9' trimethylation (H3K9me3) and restoration of silencing. The sequence is that of SWI/SNF-related matrix-associated actin-dependent regulator of chromatin subfamily A containing DEAD/H box 1 (SMARCAD1) from Bos taurus (Bovine).